The primary structure comprises 562 residues: Formate--tetrahydrofolate ligase (562 aa).

ATP is bound at residue 71-78 (TPAGEGKS).

The protein belongs to the formate--tetrahydrofolate ligase family.

It carries out the reaction (6S)-5,6,7,8-tetrahydrofolate + formate + ATP = (6R)-10-formyltetrahydrofolate + ADP + phosphate. Its pathway is one-carbon metabolism; tetrahydrofolate interconversion. In Bacillus thuringiensis (strain Al Hakam), this protein is Formate--tetrahydrofolate ligase.